The primary structure comprises 393 residues: MTAPATRNDLMIVNMGPQHPSMHGVLRLIVTLDGEDVIDCEPILGYLHRGMEKIAENRTIIQYLPYVTRWDYLATMFTEAITVNAPEQLGNIQVPKRASYIRVIMLELSRIASHLLWLGPFMADIGAQTPFFYIFRERELIYDLFEAATGMRMMHNFFRIGGVAADLPHGWIDKCLDFCDYFLTRVTEYQRLITRNPIFLERVEGVGIIGGEEAINWGLSGPMLRASGIQWDLRKVDHYESYDEFDWGVQWQKEGDSLARYLVRISEMTESVKIIQQALEGITGGPYENLEIRRFDKVWDPEWNDFDYRFISKKPSPTFELSKQELYVRVEAPKGELGIFLIGDKGIFPWRWKIRPPGFINLQILPQLVKRMKLADIMTILGSIDIIMGEVDR.

The protein belongs to the complex I 49 kDa subunit family. In terms of assembly, NDH is composed of at least 16 different subunits, 5 of which are encoded in the nucleus.

It localises to the plastid. Its subcellular location is the chloroplast thylakoid membrane. It catalyses the reaction a plastoquinone + NADH + (n+1) H(+)(in) = a plastoquinol + NAD(+) + n H(+)(out). The enzyme catalyses a plastoquinone + NADPH + (n+1) H(+)(in) = a plastoquinol + NADP(+) + n H(+)(out). In terms of biological role, NDH shuttles electrons from NAD(P)H:plastoquinone, via FMN and iron-sulfur (Fe-S) centers, to quinones in the photosynthetic chain and possibly in a chloroplast respiratory chain. The immediate electron acceptor for the enzyme in this species is believed to be plastoquinone. Couples the redox reaction to proton translocation, and thus conserves the redox energy in a proton gradient. The polypeptide is NAD(P)H-quinone oxidoreductase subunit H, chloroplastic (Daucus carota (Wild carrot)).